Here is a 100-residue protein sequence, read N- to C-terminus: Small ribosomal subunit protein uS14c (100 aa).

It belongs to the universal ribosomal protein uS14 family. Part of the 30S ribosomal subunit.

It localises to the plastid. The protein resides in the chloroplast. Its function is as follows. Binds 16S rRNA, required for the assembly of 30S particles. This chain is Small ribosomal subunit protein uS14c, found in Chara vulgaris (Common stonewort).